A 214-amino-acid chain; its full sequence is YINYKNMSHQHLLTLFNLLPVGSNISTWWNFGSMLLACLMIQIITGFFLAIHYTANINLAFSSIIHLSRDVPYGWIMQNTHAISASLFFICIYIHIARGFYYGSYLNKEVWLSGTTLLIILMATAFFGYVLPWGQMSFWAATVITNLLTAIPYLGTTLTTWLWGGFAINDPTLTRFFALHFILPFIIISMSSIHILLLHNEGSNNPLGTNSDID.

4 helical membrane-spanning segments follow: residues 31–51, 75–96, 111–131, and 176–196; these read FGSM…FLAI, WIMQ…YIHI, WLSG…GYVL, and FFAL…IHIL. Residues His81 and His95 each contribute to the heme b site. Heme b contacts are provided by His180 and His194. Position 199 (His199) interacts with a ubiquinone.

Belongs to the cytochrome b family. The cytochrome bc1 complex contains 3 respiratory subunits (MT-CYB, CYC1 and UQCRFS1), 2 core proteins (UQCRC1 and UQCRC2) and probably 6 low-molecular weight proteins. It depends on heme b as a cofactor.

The protein localises to the mitochondrion inner membrane. Functionally, component of the ubiquinol-cytochrome c reductase complex (complex III or cytochrome b-c1 complex) that is part of the mitochondrial respiratory chain. The b-c1 complex mediates electron transfer from ubiquinol to cytochrome c. Contributes to the generation of a proton gradient across the mitochondrial membrane that is then used for ATP synthesis. The chain is Cytochrome b (MT-CYB) from Bothrops atrox (Barba amarilla).